We begin with the raw amino-acid sequence, 611 residues long: Aspartate--tRNA ligase, mitochondrial (611 aa).

The transit peptide at 1–30 (MVLSRLPACLLPLVGTKVSIQGWLVATSRQ) directs the protein to the mitochondrion. Glu-192 lines the L-aspartate pocket. An aspartate region spans residues 216–219 (QQYK). Arg-238 contributes to the L-aspartate binding site. Residues 238–240 (RDE) and Glu-502 each bind ATP. Arg-509 serves as a coordination point for L-aspartate. 554 to 557 (GFDR) serves as a coordination point for ATP.

It belongs to the class-II aminoacyl-tRNA synthetase family. Type 1 subfamily.

The protein localises to the mitochondrion. The catalysed reaction is tRNA(Asp) + L-aspartate + ATP = L-aspartyl-tRNA(Asp) + AMP + diphosphate. The sequence is that of Aspartate--tRNA ligase, mitochondrial (msd1) from Schizosaccharomyces pombe (strain 972 / ATCC 24843) (Fission yeast).